We begin with the raw amino-acid sequence, 480 residues long: MRDPRVRVRFCPSPTGAPHLGLVRTALFNWVFARKHGGGFIFRIEDTDATRNREESCSQLIDTLKWLGLDWDEGPDKGGQFGPYYQSQRGDIYQEVLDKLLAADLAYESFSTKEEIEKRNLEAGRPIQLGYDNYDRTLSEQTKAAMREAGRTPIIRLRMDDENIAFEDLVKGEVVFTDPIPDFALTRASGEPLYTLVNPVDDAFMKITHVLRGEDLLSSTPRQIALYKALITIGITDYVPFFGHLPIVMGEGNRKLSKRNPESDFYFYKARGFIREGLLNYLSLLGWSISNSRDTFSLSEMIHAFDVRDVRGNPARFDYKKCLAINAYHLRELNVEDFFLRLVPFVEEMLGIPLSFEQKNSLRAICPFVQGRVQLLTEAAEMVRFLLVDNISVDFAVTDKEIDVLRHCLALLNLLDTWESAQIASCIKQAIEQFDLQPKRIFSILRLAITGRRVSPPLFESMQILGRSASLNRVETFVTN.

The 'HIGH' region motif lies at 12 to 22 (PSPTGAPHLGL). The 'KMSKS' region motif lies at 255–259 (KLSKR). K258 contacts ATP.

This sequence belongs to the class-I aminoacyl-tRNA synthetase family. Glutamate--tRNA ligase type 1 subfamily. Monomer.

It is found in the cytoplasm. The enzyme catalyses tRNA(Glu) + L-glutamate + ATP = L-glutamyl-tRNA(Glu) + AMP + diphosphate. In terms of biological role, catalyzes the attachment of glutamate to tRNA(Glu) in a two-step reaction: glutamate is first activated by ATP to form Glu-AMP and then transferred to the acceptor end of tRNA(Glu). The sequence is that of Glutamate--tRNA ligase from Tropheryma whipplei (strain TW08/27) (Whipple's bacillus).